The following is a 266-amino-acid chain: 3-methyl-2-oxobutanoate hydroxymethyltransferase (266 aa).

2 residues coordinate Mg(2+): Asp-43 and Asp-82. 3-methyl-2-oxobutanoate is bound by residues 43–44 (DS), Asp-82, and Lys-110. Glu-112 contributes to the Mg(2+) binding site. Catalysis depends on Glu-179, which acts as the Proton acceptor.

Belongs to the PanB family. Homodecamer; pentamer of dimers. Requires Mg(2+) as cofactor.

It is found in the cytoplasm. The catalysed reaction is 3-methyl-2-oxobutanoate + (6R)-5,10-methylene-5,6,7,8-tetrahydrofolate + H2O = 2-dehydropantoate + (6S)-5,6,7,8-tetrahydrofolate. It participates in cofactor biosynthesis; (R)-pantothenate biosynthesis; (R)-pantoate from 3-methyl-2-oxobutanoate: step 1/2. Its function is as follows. Catalyzes the reversible reaction in which hydroxymethyl group from 5,10-methylenetetrahydrofolate is transferred onto alpha-ketoisovalerate to form ketopantoate. The protein is 3-methyl-2-oxobutanoate hydroxymethyltransferase of Psychrobacter cryohalolentis (strain ATCC BAA-1226 / DSM 17306 / VKM B-2378 / K5).